The primary structure comprises 875 residues: Protein translocase subunit SecA (875 aa).

ATP is bound by residues Gln87, 105-109, and Asp512; that span reads GEGKT. Positions 860, 862, 871, and 872 each coordinate Zn(2+).

The protein belongs to the SecA family. As to quaternary structure, monomer and homodimer. Part of the essential Sec protein translocation apparatus which comprises SecA, SecYEG and auxiliary proteins SecDF-YajC and YidC. Requires Zn(2+) as cofactor.

Its subcellular location is the cell inner membrane. The protein localises to the cytoplasm. The catalysed reaction is ATP + H2O + cellular proteinSide 1 = ADP + phosphate + cellular proteinSide 2.. Part of the Sec protein translocase complex. Interacts with the SecYEG preprotein conducting channel. Has a central role in coupling the hydrolysis of ATP to the transfer of proteins into and across the cell membrane, serving both as a receptor for the preprotein-SecB complex and as an ATP-driven molecular motor driving the stepwise translocation of polypeptide chains across the membrane. The polypeptide is Protein translocase subunit SecA (Buchnera aphidicola subsp. Acyrthosiphon pisum (strain 5A)).